A 184-amino-acid chain; its full sequence is Bcl-2-modifying factor (184 aa).

Residues 67–75 (DKATQTLSP) form an interaction with DLC2 region. Positions 133 to 147 (IARKLQCIADQFHRL) match the BH3 motif.

This sequence belongs to the Bcl-2 family. As to quaternary structure, interacts with MCL1, BCL2, BCL2L1/BCL-Xl, BCL2A1 and BCL2L2/BCL-w. Interacts with the myosin V actin motor complex through its binding to DLC2. As to expression, isoform 1 is mainly expressed in B-lymphoid cells. Isoform 2 and isoform 3 are mainly expressed in B-CLL and normal B-cells.

In terms of biological role, may play a role in apoptosis. Isoform 1 seems to be the main initiator. This chain is Bcl-2-modifying factor (BMF), found in Homo sapiens (Human).